The sequence spans 156 residues: uncharacterized protein (156 aa).

Transmembrane regions (helical) follow at residues 46–66 (GLVLWVMAGLGFALGDFAGVV) and 114–134 (IIDILLAWTSFLLIISGIVAL).

It localises to the cell membrane. This is an uncharacterized protein from Haemophilus influenzae (strain ATCC 51907 / DSM 11121 / KW20 / Rd).